Reading from the N-terminus, the 1247-residue chain is MDNIEPPFSGNIHAETEVKKEEKKKMKKESVSLMGLFSAADNVDYFLMFLGGLGTCIHGGTLPLFFVFFGGMLDSLGKLSTDPNAISSRVSQNALYLVYLGLVNLVSAWIGVACWMQTGERQTARLRINYLKSILAKDITFFDTEARDSNFIFHISSDAILVQDAIGDKTGHVLRYLCQFIAGFVIGFLSVWQLTLLTLGVVPLIAIAGGGYAIVMSTISEKSEAAYADAGKVAEEVMSQVRTVYAFVGEEKAVKSYSNSLKKALKLSKRSGLAKGLGVGLTYSLLFCAWALLFWYASLLVRHGKTNGAKAFTTILNVIYSGFALGQAVPSLSAISKGRVAAANIFKMIGNNNLESSERLENGTTLQNVVGKIEFCGVSFAYPSRPNMVFENLSFTIHSGKTFAFVGPSGSGKSTIISMVQRFYEPRSGEILLDGNDIKNLKLKWLREQMGLVSQEPALFATTIASNILLGKEKANMDQIIEAAKAANADSFIKSLPNGYNTQVGEGGTQLSGGQKQRIAIARAVLRNPKILLLDEATSALDAESEKIVQQALDNVMEKRTTIVIAHRLSTIRNVDKIVVLRDGQVRETGSHSELISRGGDYATLVNCQDTEPQENLRSVMYESCRSQAGSYSSRRVFSSRRTSSFREDQEKTEKDSKGEDLISSSSMIWELIKLNAPEWLYALLGSIGAVLAGSQPALFSMGLAYVLTTFYSPFPSLIKREVDKVAIIFVGAGIVTAPIYILQHYFYTLMGERLTSRVRLSLFSAILSNEIGWFDLDENNTGSLTSILAADATLVRSAIADRLSTIVQNLSLTITALALAFFYSWRVAAVVTACFPLLIAASLTEQLFLKGFGGDYTRAYSRATSLAREAISNIRTVAAFSAEKQISEQFTCELSKPTKSALLRGHISGFGYGLSQCLAFCSYALGLWYISVLIKRNETNFEDSIKSFMVLLVTAYSVAETLALTPDIVKGTQALGSVFRVLHRETEIPPDQPNSRLVTHIKGDIEFRNVSFAYPTRPEIAIFKNLNLRVSAGKSLAVVGPSGSGKSTVIGLIMRFYDPSNGNLCIDGHDIKSVNLRSLRKKLALVQQEPALFSTSIHENIKYGNENASEAEIIEAAKAANAHEFISRMEEGYMTHVGDKGVQLSGGQKQRVAIARAVLKDPSVLLLDEATSALDTSAEKQVQEALDKLMKGRTTILVAHRLSTIRKADTIVVLHKGKVVEKGSHRELVSKSDGFYKKLTSLQEAV.

In terms of domain architecture, ABC transmembrane type-1 1 spans 48-337; it reads MFLGGLGTCI…AVPSLSAISK (290 aa). A run of 6 helical transmembrane segments spans residues 49–69, 95–115, 172–192, 196–216, 277–297, and 315–335; these read FLGG…FVFF, LYLV…VACW, HVLR…LSVW, LLTL…AIVM, LGVG…FWYA, and ILNV…LSAI. N-linked (GlcNAc...) asparagine glycans are attached at residues N362 and N392. The region spanning 373–608 is the ABC transporter 1 domain; it reads IEFCGVSFAY…GGDYATLVNC (236 aa). 407–414 serves as a coordination point for ATP; sequence GPSGSGKS. One can recognise an ABC transmembrane type-1 2 domain in the interval 679-971; the sequence is EWLYALLGSI…TLALTPDIVK (293 aa). Transmembrane regions (helical) follow at residues 680-700 and 727-747; these read WLYA…PALF and AIIF…QHYF. Residue N780 is glycosylated (N-linked (GlcNAc...) asparagine). 3 consecutive transmembrane segments (helical) span residues 807 to 824, 830 to 850, and 915 to 935; these read IVQN…AFFY, AVVT…QLFL, and LSQC…SVLI. N938 carries N-linked (GlcNAc...) asparagine glycosylation. The helical transmembrane segment at 949–969 threads the bilayer; it reads FMVLLVTAYSVAETLALTPDI. The region spanning 1006-1242 is the ABC transporter 2 domain; sequence IEFRNVSFAY…SDGFYKKLTS (237 aa). N1010 carries an N-linked (GlcNAc...) asparagine glycan. 1041 to 1048 contributes to the ATP binding site; that stretch reads GPSGSGKS. N-linked (GlcNAc...) asparagine glycosylation is present at N1108.

This sequence belongs to the ABC transporter superfamily. ABCB family. Multidrug resistance exporter (TC 3.A.1.201) subfamily.

The protein resides in the membrane. This is ABC transporter B family member 14 (ABCB14) from Arabidopsis thaliana (Mouse-ear cress).